The sequence spans 495 residues: uncharacterized protein (495 aa).

The segment at 337–360 is disordered; that stretch reads STSNRESDCSGNEDDSSNAKYAKK.

This is an uncharacterized protein from Caenorhabditis elegans.